Reading from the N-terminus, the 221-residue chain is Flagellar L-ring protein 2 (221 aa).

The first 16 residues, Met1–Gly16, serve as a signal peptide directing secretion. Cys17 carries the N-palmitoyl cysteine lipid modification. Cys17 carries S-diacylglycerol cysteine lipidation.

This sequence belongs to the FlgH family. The basal body constitutes a major portion of the flagellar organelle and consists of four rings (L,P,S, and M) mounted on a central rod.

The protein localises to the cell outer membrane. It localises to the bacterial flagellum basal body. Its function is as follows. Assembles around the rod to form the L-ring and probably protects the motor/basal body from shearing forces during rotation. This chain is Flagellar L-ring protein 2, found in Yersinia pseudotuberculosis serotype I (strain IP32953).